Reading from the N-terminus, the 143-residue chain is Large ribosomal subunit protein uL13 (143 aa).

Belongs to the universal ribosomal protein uL13 family. Part of the 50S ribosomal subunit.

Functionally, this protein is one of the early assembly proteins of the 50S ribosomal subunit, although it is not seen to bind rRNA by itself. It is important during the early stages of 50S assembly. The protein is Large ribosomal subunit protein uL13 of Neisseria gonorrhoeae (strain ATCC 700825 / FA 1090).